The sequence spans 192 residues: MTNSPITEPSPRQESVLRYPVLGSRRPSNYFWATAVSIGGLGFFLAGLSSYLHRNLLPIGNPIDLVFIPQGIAIGFYGVAALLLATYLWLAIAWDVGGGFNEFNKETGFVRIFRWGFPGKNRQIEVSCPISDVQAVKIVIKEGLNPKRSLYLKIKGRGEVPLTRVGAPLPLAELETQGATIASFLGVPVEGL.

Helical transmembrane passes span 30-52 and 72-94; these read YFWA…SSYL and IAIG…AIAW.

It belongs to the Ycf4 family.

It is found in the cellular thylakoid membrane. Functionally, seems to be required for the assembly of the photosystem I complex. This is Photosystem I assembly protein Ycf4 from Thermosynechococcus vestitus (strain NIES-2133 / IAM M-273 / BP-1).